The following is a 141-amino-acid chain: UPF0310 protein Mflv_0785 (141 aa).

Belongs to the UPF0310 family.

The polypeptide is UPF0310 protein Mflv_0785 (Mycolicibacterium gilvum (strain PYR-GCK) (Mycobacterium gilvum (strain PYR-GCK))).